The primary structure comprises 558 residues: Probable beta-glucosidase btgE (558 aa).

The first 18 residues, 1–18 (MKAAILATAAALTGSALA), serve as a signal peptide directing secretion. Disordered regions lie at residues 64–105 (STPS…PETP) and 251–305 (LPSS…QMGM). 2 stretches are compositionally biased toward low complexity: residues 76-105 (PETT…PETP) and 252-292 (PSSS…SSSA). The span at 293–305 (EVPQTTGSGQMGM) shows a compositional bias: polar residues. The Proton donor role is filled by Glu399. Glu495 serves as the catalytic Nucleophile.

Belongs to the glycosyl hydrolase 17 family.

It localises to the secreted. The protein resides in the cell wall. It carries out the reaction Hydrolysis of terminal, non-reducing beta-D-glucosyl residues with release of beta-D-glucose.. It participates in glycan metabolism; cellulose degradation. Beta-glucosidases are one of a number of cellulolytic enzymes involved in the degradation of cellulosic biomass. Catalyzes the last step releasing glucose from the inhibitory cellobiose. The chain is Probable beta-glucosidase btgE (btgE) from Aspergillus terreus (strain NIH 2624 / FGSC A1156).